Consider the following 633-residue polypeptide: MLSKVLLNIAFKVLLTTAKRAVDPDDDDELLPSPDLPGSDDPIAGDPDVDLNPVTEEMFSSWALFIMLLLLISALWSSYYLTQKRIRAVHETVLSIFYGMVIGLIIRMSPGHYIQDTVTFNSSYFFNVLLPPIILNSGYELNQVNFFNNMLSILIFAIPGTFISAVVIGIILYIWTFLGLESIDISFADAMSVGATLSATDPVTILSIFNAYKVDPKLYTIIFGESLLNDAISIVMFETCQKFHGQPATFSSVFEGAGLFLMTFSVSLLIGVLIGILVALLLKHTHIRRYPQIESCLILLIAYESYFFSNGCHMSGIVSLLFCGITLKHYAYYNMSRRSQITIKYIFQLLARLSENFIFIYLGLELFTEVELVYKPLLIIVAAISICVARWCAVFPLSQFVNWIYRVKTIRSMSGITGENISVPDEIPYNYQMMTFWAGLRGAVGVALALGIQGEYKFTLLATVLVVVVLTVIIFGGTTAGMLEVLNIKTGCISEEDTSDDEFDIEAPRAINLLNGSSIQTDLGPYSDNNSPDISIDQFAVSSNKNLPNNISTTGGNTFGGLNETENTSPNPARSSMDKRNLRDKLGTIFNSDSQWFQNFDEQVLKPVFLDNVSPSLQDSATQSPADFSSQNH.

The first 21 residues, Met1–Ala21, serve as a signal peptide directing secretion. Residues Val22 to Ser61 lie on the Lumenal side of the membrane. A disordered region spans residues Asp25–Ala44. The span at Leu31–Pro42 shows a compositional bias: low complexity. Residues Trp62–Thr82 traverse the membrane as a helical segment. Residues Gln83 to Arg85 lie on the Cytoplasmic side of the membrane. A helical membrane pass occupies residues Ile86–Ile106. The Lumenal segment spans residues Arg107–Thr117. A helical membrane pass occupies residues Val118 to Gly138. An Amiloride-binding motif is present at residues Tyr124 to Ile133. The Cytoplasmic segment spans residues Tyr139–Ser152. The helical transmembrane segment at Ile153–Tyr173 threads the bilayer. The Lumenal portion of the chain corresponds to Ile174 to Asp189. The helical transmembrane segment at Ala190–Ala211 threads the bilayer. The Cytoplasmic portion of the chain corresponds to Tyr212–Lys217. A helical transmembrane segment spans residues Leu218 to Glu238. Residues Thr239–Gly258 lie on the Lumenal side of the membrane. A helical membrane pass occupies residues Leu259–Ala279. Topologically, residues Leu280 to Arg288 are cytoplasmic. A helical membrane pass occupies residues Arg289–Phe308. Over Ser309–His313 the chain is Lumenal. The chain crosses the membrane as a helical span at residues Met314–Tyr333. Residues Asn334–Lys344 lie on the Cytoplasmic side of the membrane. A helical transmembrane segment spans residues Tyr345–Leu364. Over Glu365–Pro376 the chain is Cytoplasmic. A helical transmembrane segment spans residues Leu377 to Leu397. Residues Ser398–Tyr431 are Lumenal-facing. Asn420 carries an N-linked (GlcNAc...) asparagine glycan. The helical transmembrane segment at Gln432–Ile452 threads the bilayer. Topologically, residues Gln453–Lys457 are cytoplasmic. A helical membrane pass occupies residues Phe458–Thr478. Phosphothreonine is present on Thr490. Position 494 is a phosphoserine (Ser494). Thr498 carries the phosphothreonine modification. Residue Ser499 is modified to Phosphoserine. N-linked (GlcNAc...) asparagine glycosylation is found at Asn515, Asn550, and Asn563. Residues Thr553 to Asp578 form a disordered region. Residues Glu564–Arg574 are compositionally biased toward polar residues. Ser569 carries the phosphoserine modification.

The protein belongs to the monovalent cation:proton antiporter 1 (CPA1) transporter (TC 2.A.36) family. Interacts with CYP6.

It localises to the endosome membrane. The protein localises to the prevacuolar compartment membrane. Endosomal/prevacuolar electroneutral Na(+)/H(+) exchanger which mediates intracellular sequestration of Na(+) cations, regulates vacuolar pH and contributes to osmotolerance following sudden exposure to hyperosmotic media. Also contributes to the postdiauxic/stationary phase resistance to osmotic stress and allows for the continued growth of cells until the acquired osmotolerance response can occur. Involved in hygromycin resistance probably through its influence on the electrochemical proton gradient affecting secondarily the entrance of hygromycin. Mediates pH-dependent vesicle trafficking out of the endosome. Contributes to K(+) sequestration and homeostasis. The chain is Endosomal/prevacuolar sodium/hydrogen exchanger (NHX1) from Saccharomyces cerevisiae (strain ATCC 204508 / S288c) (Baker's yeast).